The sequence spans 314 residues: Glycerol-3-phosphate dehydrogenase [NAD(P)+] (314 aa).

Residues S14, F15, R35, and K108 each coordinate NADPH. Residues K108 and G136 each contribute to the sn-glycerol 3-phosphate site. Residue A140 coordinates NADPH. The sn-glycerol 3-phosphate site is built by K191, D247, S257, R258, and N259. K191 (proton acceptor) is an active-site residue. Residue R258 participates in NADPH binding. Residues L282 and E284 each contribute to the NADPH site.

Belongs to the NAD-dependent glycerol-3-phosphate dehydrogenase family.

It localises to the cytoplasm. The catalysed reaction is sn-glycerol 3-phosphate + NAD(+) = dihydroxyacetone phosphate + NADH + H(+). The enzyme catalyses sn-glycerol 3-phosphate + NADP(+) = dihydroxyacetone phosphate + NADPH + H(+). Its pathway is membrane lipid metabolism; glycerophospholipid metabolism. In terms of biological role, catalyzes the reduction of the glycolytic intermediate dihydroxyacetone phosphate (DHAP) to sn-glycerol 3-phosphate (G3P), the key precursor for phospholipid synthesis. This chain is Glycerol-3-phosphate dehydrogenase [NAD(P)+], found in Rickettsia bellii (strain OSU 85-389).